Consider the following 3001-residue polypeptide: BEACH domain-containing protein C2 (3001 aa).

Disordered regions lie at residues 43-80, 103-156, 1018-1076, 1846-1868, 2039-2071, 2101-2132, and 2193-2212; these read DFEQ…SSFG, DVQS…KATV, NVLA…NVGS, TFSS…PRDK, YSGT…SNPP, AEEH…RTSN, and NLAD…DRSW. At Ser48 the chain carries Phosphoserine. Polar residues-rich tracts occupy residues 57–72, 121–132, and 1037–1050; these read NESQ…FSNS, SMQQSLSETSLD, and SPYN…QLDS. Positions 1854–1863 are enriched in pro residues; sequence LEPPNNNAPP. Residues 2101-2119 show a composition bias toward basic and acidic residues; the sequence is AEEHKRDEGRISGSHEHAS. Over residues 2120–2129 the composition is skewed to polar residues; the sequence is RTSAGNSDPR. The BEACH-type PH domain occupies 2151–2260; that stretch reads ELDERILLEL…GRRNAYRAIV (110 aa). The span at 2196-2211 shows a compositional bias: basic and acidic residues; sequence DHSDESQSGDQEKDRS. Residues 2275 to 2564 form the BEACH domain; sequence QRPEQLLRRT…QLLTVPHMKR (290 aa). WD repeat units lie at residues 2679-2718, 2721-2760, 2802-2841, 2842-2881, and 2953-2992; these read SGIR…TLET, GHCA…TSRT, GHRR…LIRR, LVGV…IAKA, and GQGQ…LKVV.

The chain is BEACH domain-containing protein C2 from Arabidopsis thaliana (Mouse-ear cress).